The chain runs to 199 residues: Large ribosomal subunit protein bL25 (199 aa).

This sequence belongs to the bacterial ribosomal protein bL25 family. CTC subfamily. In terms of assembly, part of the 50S ribosomal subunit; part of the 5S rRNA/L5/L18/L25 subcomplex. Contacts the 5S rRNA. Binds to the 5S rRNA independently of L5 and L18.

Functionally, this is one of the proteins that binds to the 5S RNA in the ribosome where it forms part of the central protuberance. The polypeptide is Large ribosomal subunit protein bL25 (Rickettsia akari (strain Hartford)).